The primary structure comprises 183 residues: Macro domain-containing protein (183 aa).

One can recognise a Macro domain in the interval 1–174 (MKKVHLIQAD…IYKNILSNID (174 aa)).

This sequence belongs to the MacroD-type family.

The chain is Macro domain-containing protein from Acinetobacter sp. (strain ED45-25).